Reading from the N-terminus, the 342-residue chain is Dihydroorotate dehydrogenase (quinone) (342 aa).

FMN is bound by residues 61–65 and T85; that span reads AGLDK. Residue K65 participates in substrate binding. Residue 110-114 coordinates substrate; sequence NRMGF. Residues N138 and N171 each coordinate FMN. N171 lines the substrate pocket. The active-site Nucleophile is S174. A substrate-binding site is contributed by N176. Residues K216 and T244 each coordinate FMN. 245–246 lines the substrate pocket; it reads NT. FMN is bound by residues G267, G296, and 317 to 318; that span reads YS.

Belongs to the dihydroorotate dehydrogenase family. Type 2 subfamily. Monomer. Requires FMN as cofactor.

It is found in the cell membrane. It carries out the reaction (S)-dihydroorotate + a quinone = orotate + a quinol. The protein operates within pyrimidine metabolism; UMP biosynthesis via de novo pathway; orotate from (S)-dihydroorotate (quinone route): step 1/1. Catalyzes the conversion of dihydroorotate to orotate with quinone as electron acceptor. The protein is Dihydroorotate dehydrogenase (quinone) of Pseudomonas aeruginosa (strain UCBPP-PA14).